The chain runs to 200 residues: Probable fatty acid desaturase MIMI_L630 (200 aa).

Transmembrane regions (helical) follow at residues 9–29 and 79–99; these read FIQI…YHWI and IGPL…FIMI.

The protein belongs to the fatty acid desaturase CarF family.

The protein resides in the membrane. The chain is Probable fatty acid desaturase MIMI_L630 from Acanthamoeba polyphaga mimivirus (APMV).